The chain runs to 270 residues: Formamidopyrimidine-DNA glycosylase (270 aa).

Proline 2 functions as the Schiff-base intermediate with DNA in the catalytic mechanism. The active-site Proton donor is the glutamate 3. Lysine 58 functions as the Proton donor; for beta-elimination activity in the catalytic mechanism. Residues histidine 90, arginine 109, and arginine 152 each coordinate DNA. The segment at 237–270 (RVYGREGEACECGGAIVRVVQSGRSTFYCRKCQR) adopts an FPG-type zinc-finger fold. Catalysis depends on arginine 260, which acts as the Proton donor; for delta-elimination activity.

The protein belongs to the FPG family. As to quaternary structure, monomer. Requires Zn(2+) as cofactor.

It carries out the reaction Hydrolysis of DNA containing ring-opened 7-methylguanine residues, releasing 2,6-diamino-4-hydroxy-5-(N-methyl)formamidopyrimidine.. It catalyses the reaction 2'-deoxyribonucleotide-(2'-deoxyribose 5'-phosphate)-2'-deoxyribonucleotide-DNA = a 3'-end 2'-deoxyribonucleotide-(2,3-dehydro-2,3-deoxyribose 5'-phosphate)-DNA + a 5'-end 5'-phospho-2'-deoxyribonucleoside-DNA + H(+). Functionally, involved in base excision repair of DNA damaged by oxidation or by mutagenic agents. Acts as a DNA glycosylase that recognizes and removes damaged bases. Has a preference for oxidized purines, such as 7,8-dihydro-8-oxoguanine (8-oxoG). Has AP (apurinic/apyrimidinic) lyase activity and introduces nicks in the DNA strand. Cleaves the DNA backbone by beta-delta elimination to generate a single-strand break at the site of the removed base with both 3'- and 5'-phosphates. In Sphingopyxis alaskensis (strain DSM 13593 / LMG 18877 / RB2256) (Sphingomonas alaskensis), this protein is Formamidopyrimidine-DNA glycosylase.